Consider the following 509-residue polypeptide: Steroid 17-alpha-hydroxylase/17,20 lyase (509 aa).

Cys-440 is a binding site for heme.

The protein belongs to the cytochrome P450 family. Heme serves as cofactor.

It is found in the endoplasmic reticulum membrane. It localises to the microsome membrane. The enzyme catalyses a C21-steroid + reduced [NADPH--hemoprotein reductase] + O2 = a 17alpha-hydroxy-C21-steroid + oxidized [NADPH--hemoprotein reductase] + H2O + H(+). The catalysed reaction is progesterone + reduced [NADPH--hemoprotein reductase] + O2 = 17alpha-hydroxyprogesterone + oxidized [NADPH--hemoprotein reductase] + H2O + H(+). It catalyses the reaction pregnenolone + reduced [NADPH--hemoprotein reductase] + O2 = 17alpha-hydroxypregnenolone + oxidized [NADPH--hemoprotein reductase] + H2O + H(+). It carries out the reaction 17alpha-hydroxyprogesterone + reduced [NADPH--hemoprotein reductase] + O2 = androst-4-ene-3,17-dione + acetate + oxidized [NADPH--hemoprotein reductase] + H2O + 2 H(+). The enzyme catalyses 17alpha-hydroxyprogesterone + reduced [NADPH--hemoprotein reductase] + O2 = 16alpha,17alpha-dihydroxyprogesterone + oxidized [NADPH--hemoprotein reductase] + H2O + H(+). The catalysed reaction is 16alpha,17alpha-dihydroxyprogesterone + reduced [NADPH--hemoprotein reductase] + O2 = 6beta,16alpha,17alpha-trihydroxyprogesterone + oxidized [NADPH--hemoprotein reductase] + H2O + H(+). It catalyses the reaction 17alpha-hydroxypregnenolone + reduced [NADPH--hemoprotein reductase] + O2 = 3beta-hydroxyandrost-5-en-17-one + acetate + oxidized [NADPH--hemoprotein reductase] + H2O + 2 H(+). It carries out the reaction 16alpha,17alpha-dihydroxypregnenolone + reduced [NADPH--hemoprotein reductase] + O2 = 3beta,16alpha-dihydroxy-androst-5-en-17-one + acetate + oxidized [NADPH--hemoprotein reductase] + H2O + 2 H(+). The enzyme catalyses 3beta-hydroxyandrost-5-en-17-one + reduced [NADPH--hemoprotein reductase] + O2 = 3beta,16alpha-dihydroxy-androst-5-en-17-one + oxidized [NADPH--hemoprotein reductase] + H2O + H(+). The catalysed reaction is androst-4-ene-3,17-dione + reduced [NADPH--hemoprotein reductase] + O2 = 16alpha-hydroxyandrost-4-ene-3,17-dione + oxidized [NADPH--hemoprotein reductase] + H2O + H(+). Its pathway is steroid hormone biosynthesis. It functions in the pathway steroid biosynthesis; glucocorticoid biosynthesis. Regulated predominantly by intracellular cAMP levels. The 17,20-lyase activity is stimulated by cytochrome b5, which acts as an allosteric effector increasing the Vmax of the lyase activity. Its function is as follows. A cytochrome P450 monooxygenase involved in corticoid and androgen biosynthesis. Catalyzes 17-alpha hydroxylation of C21 steroids, which is common for both pathways. A second oxidative step, required only for androgen synthesis, involves an acyl-carbon cleavage. The 17-alpha hydroxy intermediates, as part of adrenal glucocorticoids biosynthesis pathway, are precursors of cortisol. Hydroxylates steroid hormones, pregnenolone and progesterone to form 17-alpha hydroxy metabolites, followed by the cleavage of the C17-C20 bond to form C19 steroids, dehydroepiandrosterone (DHEA) and androstenedione. Has 16-alpha hydroxylase activity. Catalyzes 16-alpha hydroxylation of 17-alpha hydroxy pregnenolone, followed by the cleavage of the C17-C20 bond to form 16-alpha-hydroxy DHEA. Also 16-alpha hydroxylates androgens, relevant for estriol synthesis. Mechanistically, uses molecular oxygen inserting one oxygen atom into a substrate, and reducing the second into a water molecule, with two electrons provided by NADPH via cytochrome P450 reductase (CPR; NADPH-ferrihemoprotein reductase). The protein is Steroid 17-alpha-hydroxylase/17,20 lyase (Cyp17a1) of Peromyscus leucopus (White-footed mouse).